Reading from the N-terminus, the 414-residue chain is Pre-mRNA-processing protein 45 (414 aa).

2 disordered regions span residues 128–159 (ESKR…DTPI) and 264–292 (RSKI…KKIK). Positions 135–146 (LQPSRQKNTSSK) are enriched in polar residues.

Belongs to the SNW family. Associated with the spliceosome.

The protein localises to the nucleus. In terms of biological role, involved in pre-mRNA splicing. The protein is Pre-mRNA-processing protein 45 (PRP45) of Candida glabrata (strain ATCC 2001 / BCRC 20586 / JCM 3761 / NBRC 0622 / NRRL Y-65 / CBS 138) (Yeast).